We begin with the raw amino-acid sequence, 995 residues long: Endosome/lysosome-associated apoptosis and autophagy regulator family member 2 (995 aa).

The first 21 residues, 1–21 (MGVFCWSGCLVISLQLLLGAA), serve as a signal peptide directing secretion. The Extracellular segment spans residues 22-895 (LDNLSTCKEE…ACESIDFWLK (874 aa)). N-linked (GlcNAc...) asparagine glycans are attached at residues asparagine 24, asparagine 136, asparagine 245, asparagine 372, asparagine 527, asparagine 649, asparagine 683, asparagine 700, and asparagine 758. The 205-residue stretch at 639-843 (SECLVTYTNE…LWETAEACPL (205 aa)) folds into the MRH domain. Cystine bridges form between cysteine 641–cysteine 687 and cysteine 697–cysteine 725. 2 disulfides stabilise this stretch: cysteine 793/cysteine 829 and cysteine 805/cysteine 841. N-linked (GlcNAc...) asparagine glycosylation is present at asparagine 883. The helical transmembrane segment at 896–916 (VGAGVGAFTAVLLIALTCYFW) threads the bilayer. At 917-995 (KKNQKLEYKY…QLKSSRAQNI (79 aa)) the chain is on the cytoplasmic side.

Belongs to the ELAPOR family. Expressed in the animal half of the embryo during gastrulation, becoming restricted to the ventral ectoderm at stage 12.5. At the neurula stage, expressed in the anterior ectoderm surrounding the neural plate, and weakly in the epidermis. Expression is especially high in the presumptive hatching gland and cement gland regions. Surprisingly, by the tailbud stage (stage 22), expression is limited to the hatching gland and is not seen in the cement gland. Conversely, in tadpoles expressed broadly in the head, heart and fin. Expression in the head is seen in the primary mouth and in the brain, eyes, otic vesicles and olfactory pits.

It localises to the cell membrane. Functionally, functions as a regulator of the BMP signaling pathway and is involved in epidermal differentiation. The polypeptide is Endosome/lysosome-associated apoptosis and autophagy regulator family member 2 (elapor2) (Xenopus laevis (African clawed frog)).